The sequence spans 156 residues: Protein E6 (156 aa).

2 zinc fingers span residues C40–C76 and C113–C149.

The protein belongs to the papillomaviridae E6 protein family. Forms homodimers. Interacts with ubiquitin-protein ligase UBE3A/E6-AP; this interaction stimulates UBE3A ubiquitin activity. Interacts with host BAK1.

The protein resides in the host cytoplasm. It is found in the host nucleus. Plays a major role in the induction and maintenance of cellular transformation. E6 associates with host UBE3A/E6-AP ubiquitin-protein ligase and modulates its activity. Protects host keratinocytes from apoptosis by mediating the degradation of host BAK1. May also inhibit host immune response. The sequence is that of Protein E6 from Homo sapiens (Human).